The chain runs to 1537 residues: Flocculation protein FLO1 (1537 aa).

A signal peptide spans 1–24 (MTMPHRYMFLAVFTLLALTSVASG). Residues 74–249 (GGQTDISIDY…GTTVSDDFEG (176 aa)) form the PA14 domain. Residues Asn135 and Asn187 are each glycosylated (N-linked (GlcNAc...) asparagine). A sugar recognition region spans residues 197–240 (GGSLPPNIEGTVYMYAGYYYPMKVVYSNAVSWGTLPISVTLPDG). N-linked (GlcNAc...) asparagine glycosylation is present at Asn262. 18 repeat units span residues 278-322 (TTTE…STII), 323-367 (TTTE…TTAI), 368-412 (TTTE…TTAM), 413-457 (TTTQ…TTAM), 458-502 (TTTQ…TTAM), 503-547 (TTTQ…TTAM), 548-592 (TTPQ…TTAI), 593-637 (TTTE…TTAI), 638-682 (TTTQ…TTAM), 683-727 (TTTQ…TTAM), 728-772 (TTTQ…GLIS), 773-817 (TTTE…GLVT), 818-862 (TTTE…GLIS), 863-907 (TTTE…GLIS), 908-952 (TTTE…GLIS), 953-997 (TTTE…GLIS), 998-1042 (TTTE…GLVT), and 1043-1087 (TTTE…ISSS). The 18 X 45 AA approximate tandem repeats, Thr-rich stretch occupies residues 278-1087 (TTTEPWTGTF…KTPTTAISSS (810 aa)). N-linked (GlcNAc...) asparagine glycosylation is found at Asn329, Asn374, Asn419, Asn464, Asn509, Asn554, Asn599, Asn644, Asn689, and Asn734. 2 disordered regions span residues 770–799 (LIST…NGQP) and 860–889 (LIST…NGQP). The span at 773–795 (TTTEPWTGTFTSTSTEMTTVTGT) shows a compositional bias: low complexity. Over residues 863–885 (TTTEPWTGTFTSTSTEMTTITGT) the composition is skewed to low complexity. Positions 995-1024 (LISTTTEPWTGTFTSTSTEMTTVTGTNGQP) are disordered. Positions 998–1020 (TTTEPWTGTFTSTSTEMTTVTGT) are enriched in low complexity. N-linked (GlcNAc...) asparagine glycosylation is present at Asn1114. 2 consecutive repeat copies span residues 1118 to 1137 (VISS…TSSP) and 1138 to 1157 (VISS…IFSE). The 2 X 20 AA approximate tandem repeats, Ser/Thr-rich stretch occupies residues 1118-1157 (VISSSVISSSVTSSLFTSSPVISSSVISSSTTTSTSIFSE). Residues 1161-1220 (SSVIPTSSSTSGSSESETSSAGSVSSSSFISSESSKSPTYSSSSLPLVTSATTSQETASS) are compositionally biased toward low complexity. The tract at residues 1161–1232 (SSVIPTSSST…PATTTKTSEQ (72 aa)) is disordered. The span at 1222–1232 (PPATTTKTSEQ) shows a compositional bias: polar residues. A run of 6 repeats spans residues 1226 to 1276 (TTKT…CPIS), 1291 to 1341 (TTET…CPIS), 1342 to 1392 (TTES…RPQT), 1408 to 1416 (ETTTNTLAA), 1417 to 1425 (ETTTNTVAA), and 1426 to 1434 (ETITNTGAA). The tract at residues 1226-1392 (TTKTSEQTTL…TVYPTWRPQT (167 aa)) is 3 X 51 AA approximate repeats, Ser/Thr-rich. The span at 1392–1404 (TANEESVSSKMNS) shows a compositional bias: polar residues. Residues 1392–1414 (TANEESVSSKMNSATGETTTNTL) form a disordered region. Residues 1405–1414 (ATGETTTNTL) show a composition bias toward low complexity. A 3 X 9 AA approximate tandem repeats, Thr-rich region spans residues 1408–1434 (ETTTNTLAAETTTNTVAAETITNTGAA). The disordered stretch occupies residues 1468-1497 (VSVSETGNTKSLTSSGLSTMSQQPRSTPAS). Positions 1472–1497 (ETGNTKSLTSSGLSTMSQQPRSTPAS) are enriched in polar residues. Gly1514 carries GPI-anchor amidated glycine lipidation. The propeptide at 1515 to 1537 (SANSLLAGSGLSVFIASLLLAII) is removed in mature form.

The protein belongs to the flocculin family. In terms of processing, extensively N- and O-glycosylated. The GPI-anchor is attached to the protein in the endoplasmic reticulum and serves to target the protein to the cell surface. There, the glucosamine-inositol phospholipid moiety is cleaved off and the GPI-modified mannoprotein is covalently attached via its lipidless GPI glycan remnant to the 1,6-beta-glucan of the outer cell wall layer.

It localises to the cell membrane. Its subcellular location is the secreted. The protein resides in the cell wall. In terms of biological role, cell wall protein that participates directly in adhesive cell-cell interactions during yeast flocculation, a reversible, asexual and Ca(2+)-dependent process in which cells adhere to form aggregates (flocs) consisting of thousands of cells. The lectin-like protein sticks out of the cell wall of flocculent cells and selectively binds mannose residues in the cell walls of adjacent cells. Activity is inhibited by mannose, but not by glucose, maltose, sucrose or galactose. Also involved in cell-substrate adhesion. The protein is Flocculation protein FLO1 (FLO1) of Saccharomyces cerevisiae (strain ATCC 204508 / S288c) (Baker's yeast).